Consider the following 60-residue polypeptide: Large ribosomal subunit protein uL30 (60 aa).

Belongs to the universal ribosomal protein uL30 family. As to quaternary structure, part of the 50S ribosomal subunit.

This is Large ribosomal subunit protein uL30 from Burkholderia mallei (strain NCTC 10247).